The chain runs to 519 residues: NAD-dependent histone deacetylase SIR2 (519 aa).

The interval 154 to 212 (EIDENDNKNDGTNNSDIDSDIDSNSDMDSQSESGELDDAMDVDDSLSENEDEYDQDMST) is disordered. Residues 187 to 208 (GELDDAMDVDDSLSENEDEYDQ) are compositionally biased toward acidic residues. The 266-residue stretch at 221–486 (MTPFKYKLPD…SYLCKCLKWD (266 aa)) folds into the Deacetylase sirtuin-type domain. Residues 246–265 (GAGI…KGLY) and 328–331 (QNID) contribute to the NAD(+) site. Catalysis depends on His348, which acts as the Proton acceptor. 4 residues coordinate Zn(2+): Cys356, Cys359, Cys380, and Cys383. NAD(+) contacts are provided by residues 430-432 (GTS), 455-457 (NKD), and Cys472.

Belongs to the sirtuin family. Class I subfamily. As to quaternary structure, interacts with HXK1. Zn(2+) serves as cofactor.

It localises to the nucleus. The catalysed reaction is N(6)-acetyl-L-lysyl-[protein] + NAD(+) + H2O = 2''-O-acetyl-ADP-D-ribose + nicotinamide + L-lysyl-[protein]. Functionally, NAD-dependent deacetylase. Heterochromatin component that silences transcription at silent mating loci, telomeres and the ribosomal DNA, and that also suppresses recombination in the rDNA and extends replicative life span. It acts as a NAD-dependent histone deacetylase, which deacetylates 'Lys-9' and 'Lys-14' of Histone H3 and 'Lys-16' of Histone H4. Functions in the distribution of oxidatively damaged proteins during cell division. Mediates phenotypic switching. The polypeptide is NAD-dependent histone deacetylase SIR2 (Candida albicans (strain SC5314 / ATCC MYA-2876) (Yeast)).